A 137-amino-acid chain; its full sequence is Large-conductance mechanosensitive channel (137 aa).

The next 3 membrane-spanning stretches (helical) occupy residues 15–35, 38–58, and 80–100; these read VDLA…NSIV, IIMP…MFIQ, and GNFV…FLVV.

Belongs to the MscL family. Homopentamer.

Its subcellular location is the cell inner membrane. Its function is as follows. Channel that opens in response to stretch forces in the membrane lipid bilayer. May participate in the regulation of osmotic pressure changes within the cell. In Brucella anthropi (strain ATCC 49188 / DSM 6882 / CCUG 24695 / JCM 21032 / LMG 3331 / NBRC 15819 / NCTC 12168 / Alc 37) (Ochrobactrum anthropi), this protein is Large-conductance mechanosensitive channel.